The primary structure comprises 298 residues: MANLMNEFPDIEIKQDEPLMNYTYTKTGGPADWLAFPETIDQVKELVDYVREHEMGLTVLGNASNLIVGDGGIDDLTIILTRLNKIEVHDNKVTAQAGASYIATTEAARDSELTGLEFAAGIPGSIGGAVFMNAGAYGGETKNVVSEATVMLPDGTIKHLTNEELDFGYRHSSIQDNNGVVLDATFALEPGKYDEIKARMDDLNERREAKQPLDLPSCGSVFKRPEGYYAGKLIHDAGLQGYTSGGAQVSTKHAGFIVNIDHGTAADYVNVIHHVQKTVKEKFGVDLETEVRIIGRQD.

Positions 26–191 constitute an FAD-binding PCMH-type domain; it reads KTGGPADWLA…LDATFALEPG (166 aa). Residue R170 is part of the active site. Residue S220 is the Proton donor of the active site. E290 is an active-site residue.

This sequence belongs to the MurB family. The cofactor is FAD.

It localises to the cytoplasm. The enzyme catalyses UDP-N-acetyl-alpha-D-muramate + NADP(+) = UDP-N-acetyl-3-O-(1-carboxyvinyl)-alpha-D-glucosamine + NADPH + H(+). It participates in cell wall biogenesis; peptidoglycan biosynthesis. Its function is as follows. Cell wall formation. This chain is UDP-N-acetylenolpyruvoylglucosamine reductase, found in Limosilactobacillus reuteri subsp. reuteri (strain JCM 1112) (Lactobacillus reuteri).